Reading from the N-terminus, the 362-residue chain is 5-amino-6-(D-ribitylamino)uracil--L-tyrosine 4-hydroxyphenyl transferase (362 aa).

In terms of domain architecture, Radical SAM core spans 48 to 294; it reads ITYVVNRNIN…GDTIKNIQVS (247 aa). Residues Cys62, Cys66, and Cys69 each coordinate [4Fe-4S] cluster.

It belongs to the radical SAM superfamily. CofH family. In terms of assembly, consists of two subunits, CofG and CofH. [4Fe-4S] cluster is required as a cofactor.

It carries out the reaction 5-amino-6-(D-ribitylamino)uracil + L-tyrosine + S-adenosyl-L-methionine = 5-amino-5-(4-hydroxybenzyl)-6-(D-ribitylimino)-5,6-dihydrouracil + 2-iminoacetate + 5'-deoxyadenosine + L-methionine + H(+). It functions in the pathway cofactor biosynthesis; coenzyme F0 biosynthesis. Catalyzes the radical-mediated synthesis of 5-amino-5-(4-hydroxybenzyl)-6-(D-ribitylimino)-5,6-dihydrouracil from 5-amino-6-(D-ribitylamino)uracil and L-tyrosine. This chain is 5-amino-6-(D-ribitylamino)uracil--L-tyrosine 4-hydroxyphenyl transferase, found in Methanococcus aeolicus (strain ATCC BAA-1280 / DSM 17508 / OCM 812 / Nankai-3).